A 174-amino-acid chain; its full sequence is Co-chaperone protein HscB (174 aa).

Positions 2-74 (DYFTLFGLPA…LKRAEYMLSL (73 aa)) constitute a J domain.

This sequence belongs to the HscB family. As to quaternary structure, interacts with HscA and stimulates its ATPase activity. Interacts with IscU.

In terms of biological role, co-chaperone involved in the maturation of iron-sulfur cluster-containing proteins. Seems to help targeting proteins to be folded toward HscA. The sequence is that of Co-chaperone protein HscB from Yersinia pestis bv. Antiqua (strain Antiqua).